Reading from the N-terminus, the 223-residue chain is Thiamine-phosphate synthase (223 aa).

4-amino-2-methyl-5-(diphosphooxymethyl)pyrimidine is bound by residues 42 to 46 (QLRDK) and Asn-83. Residues Asp-84 and Asp-103 each contribute to the Mg(2+) site. Ser-122 contacts 4-amino-2-methyl-5-(diphosphooxymethyl)pyrimidine. 148–150 (TPT) provides a ligand contact to 2-[(2R,5Z)-2-carboxy-4-methylthiazol-5(2H)-ylidene]ethyl phosphate. Residue Lys-151 coordinates 4-amino-2-methyl-5-(diphosphooxymethyl)pyrimidine. Residue Gly-179 participates in 2-[(2R,5Z)-2-carboxy-4-methylthiazol-5(2H)-ylidene]ethyl phosphate binding.

Belongs to the thiamine-phosphate synthase family. The cofactor is Mg(2+).

The enzyme catalyses 2-[(2R,5Z)-2-carboxy-4-methylthiazol-5(2H)-ylidene]ethyl phosphate + 4-amino-2-methyl-5-(diphosphooxymethyl)pyrimidine + 2 H(+) = thiamine phosphate + CO2 + diphosphate. It carries out the reaction 2-(2-carboxy-4-methylthiazol-5-yl)ethyl phosphate + 4-amino-2-methyl-5-(diphosphooxymethyl)pyrimidine + 2 H(+) = thiamine phosphate + CO2 + diphosphate. It catalyses the reaction 4-methyl-5-(2-phosphooxyethyl)-thiazole + 4-amino-2-methyl-5-(diphosphooxymethyl)pyrimidine + H(+) = thiamine phosphate + diphosphate. Its pathway is cofactor biosynthesis; thiamine diphosphate biosynthesis; thiamine phosphate from 4-amino-2-methyl-5-diphosphomethylpyrimidine and 4-methyl-5-(2-phosphoethyl)-thiazole: step 1/1. In terms of biological role, condenses 4-methyl-5-(beta-hydroxyethyl)thiazole monophosphate (THZ-P) and 2-methyl-4-amino-5-hydroxymethyl pyrimidine pyrophosphate (HMP-PP) to form thiamine monophosphate (TMP). The sequence is that of Thiamine-phosphate synthase from Mycolicibacterium paratuberculosis (strain ATCC BAA-968 / K-10) (Mycobacterium paratuberculosis).